The sequence spans 360 residues: Aminomethyltransferase (360 aa).

Belongs to the GcvT family. The glycine cleavage system is composed of four proteins: P, T, L and H.

It catalyses the reaction N(6)-[(R)-S(8)-aminomethyldihydrolipoyl]-L-lysyl-[protein] + (6S)-5,6,7,8-tetrahydrofolate = N(6)-[(R)-dihydrolipoyl]-L-lysyl-[protein] + (6R)-5,10-methylene-5,6,7,8-tetrahydrofolate + NH4(+). In terms of biological role, the glycine cleavage system catalyzes the degradation of glycine. The sequence is that of Aminomethyltransferase from Legionella pneumophila (strain Paris).